A 203-amino-acid polypeptide reads, in one-letter code: Thymidylate kinase (203 aa).

10 to 17 provides a ligand contact to ATP; sequence GTEGSGKS.

The protein belongs to the thymidylate kinase family.

The enzyme catalyses dTMP + ATP = dTDP + ADP. Functionally, phosphorylation of dTMP to form dTDP in both de novo and salvage pathways of dTTP synthesis. The polypeptide is Thymidylate kinase (Dichelobacter nodosus (strain VCS1703A)).